The chain runs to 76 residues: Centromere protein W (76 aa).

Belongs to the CENP-W/WIP1 family. Heterodimer with CENPT; this dimer coassembles with CENPS-CENPX heterodimers at centromeres to form the tetrameric CENP-T-W-S-X complex, which is a subcomplex of the large constitutive centromere-associated network (CCAN, also known as the interphase centromere complex or ICEN). Interacts with NPM1.

Its subcellular location is the nucleus. It is found in the chromosome. It localises to the centromere. The protein resides in the kinetochore. Functionally, component of the CENPA-NAC (nucleosome-associated) complex, a complex that plays a central role in assembly of kinetochore proteins, mitotic progression and chromosome segregation. The CENPA-NAC complex recruits the CENPA-CAD (nucleosome distal) complex and may be involved in incorporation of newly synthesized CENPA into centromeres. Part of a nucleosome-associated complex that binds specifically to histone H3-containing nucleosomes at the centromere, as opposed to nucleosomes containing CENPA. Component of the heterotetrameric CENP-T-W-S-X complex that binds and supercoils DNA, and plays an important role in kinetochore assembly. CENPW has a fundamental role in kinetochore assembly and function. It is one of the inner kinetochore proteins, with most further proteins binding downstream. Required for normal chromosome organization and normal progress through mitosis. In Gallus gallus (Chicken), this protein is Centromere protein W (CENPW).